A 344-amino-acid chain; its full sequence is Putative transport protein sll0060 (344 aa).

8 helical membrane-spanning segments follow: residues 14 to 34 (LWIG…LQIL), 41 to 61 (LRIF…VRWL), 72 to 92 (AVAL…LLVI), 155 to 175 (LINL…IFIM), 215 to 235 (IGQA…LSIF), 237 to 257 (VPLA…PFGG), 262 to 282 (VLIS…VLAI), and 310 to 330 (ILLS…LVAI).

This sequence belongs to the autoinducer-2 exporter (AI-2E) (TC 2.A.86) family.

It localises to the cell membrane. The chain is Putative transport protein sll0060 from Synechocystis sp. (strain ATCC 27184 / PCC 6803 / Kazusa).